The following is a 179-amino-acid chain: Large ribosomal subunit protein uL5 (179 aa).

This sequence belongs to the universal ribosomal protein uL5 family. Part of the 50S ribosomal subunit; part of the 5S rRNA/L5/L18/L25 subcomplex. Contacts the 5S rRNA and the P site tRNA. Forms a bridge to the 30S subunit in the 70S ribosome.

This is one of the proteins that bind and probably mediate the attachment of the 5S RNA into the large ribosomal subunit, where it forms part of the central protuberance. In the 70S ribosome it contacts protein S13 of the 30S subunit (bridge B1b), connecting the 2 subunits; this bridge is implicated in subunit movement. Contacts the P site tRNA; the 5S rRNA and some of its associated proteins might help stabilize positioning of ribosome-bound tRNAs. This chain is Large ribosomal subunit protein uL5, found in Cellvibrio japonicus (strain Ueda107) (Pseudomonas fluorescens subsp. cellulosa).